The chain runs to 161 residues: DNA endonuclease I-CvuI (161 aa).

Belongs to the LAGLIDADG endonuclease family.

It is found in the plastid. The protein localises to the chloroplast. Its function is as follows. Probable endonuclease involved in intron homing. This chain is DNA endonuclease I-CvuI, found in Chlorella vulgaris (Green alga).